The following is a 316-amino-acid chain: MRLVFMGTPDFAVPTLEAIVAAGHEVALVVTRPDRPRGRGQKPQPSPVKEAALRLGLPVDHPACLDNEFVQKLKDLGVEAGVVVAFGRILPPRLLDAFPQRWINVHASLLPKYRGAAPIHRAVIDGEKETGITTMLMSEGLDEGDMLLKRSLAIGPDDTTGQVHDALAELGARLLVETLAAMEAGRLQPQPQDGSQASYAPMLARADEQVDWSAPAEAVHNRVRGMNPWPGAFTMDEGKILKILRGRLRHEGLPLPDPTGSAAHPGEILQIVGDEVAVATGAGVYWLSEVRPAGGKTMTAGAYARGRRIGPGFRFG.

108–111 (SLLP) contacts (6S)-5,6,7,8-tetrahydrofolate.

This sequence belongs to the Fmt family.

The catalysed reaction is L-methionyl-tRNA(fMet) + (6R)-10-formyltetrahydrofolate = N-formyl-L-methionyl-tRNA(fMet) + (6S)-5,6,7,8-tetrahydrofolate + H(+). In terms of biological role, attaches a formyl group to the free amino group of methionyl-tRNA(fMet). The formyl group appears to play a dual role in the initiator identity of N-formylmethionyl-tRNA by promoting its recognition by IF2 and preventing the misappropriation of this tRNA by the elongation apparatus. This is Methionyl-tRNA formyltransferase from Heliobacterium modesticaldum (strain ATCC 51547 / Ice1).